We begin with the raw amino-acid sequence, 156 residues long: Small ribosomal subunit protein bS16 (156 aa).

Residues 124–135 are compositionally biased toward low complexity; that stretch reads AAKAAEAETPAE. Residues 124-156 form a disordered region; sequence AAKAAEAETPAEVQHDDEKVELADVEESAPESV. Residues 136-145 show a composition bias toward basic and acidic residues; sequence VQHDDEKVEL. The span at 146–156 shows a compositional bias: acidic residues; that stretch reads ADVEESAPESV.

This sequence belongs to the bacterial ribosomal protein bS16 family.

The protein is Small ribosomal subunit protein bS16 of Bifidobacterium animalis subsp. lactis (strain AD011).